The chain runs to 230 residues: Protein RESPONSE TO ABA AND SALT 1 (230 aa).

The region spanning 7–230 is the DOG1 domain; sequence SQSFTIFVDG…RLRDRDQERA (224 aa).

In terms of biological role, negative regulator of salt (NaCl) tolerance probably by enhancing abscisic acid (ABA) sensitivity. This is Protein RESPONSE TO ABA AND SALT 1 from Arabidopsis thaliana (Mouse-ear cress).